The sequence spans 165 residues: MMEEIDRFQVPTAHSEMQPLDPTAASISDGDCDAREEKQRELARKGSLKNGSMGSPVNQQPKKNNVMARTRLVVPNKGYSSLDQSPDEKPLVALDTDSDDDFDMSRYSSSGYSSAEQINQDLNIQLLKDGYRLDEIPDDEDLDLIPPSQVSPCSLIYFQEGVWKT.

N-acetylmethionine is present on methionine 1. Residues 1-114 (MMEEIDRFQV…SRYSSSGYSS (114 aa)) form a disordered region. Residues 32 to 44 (CDAREEKQRELAR) are compositionally biased toward basic and acidic residues. Positions 49–63 (KNGSMGSPVNQQPKK) are enriched in polar residues. Phosphoserine is present on residues serine 55 and serine 85. At threonine 96 the chain carries Phosphothreonine. 2 positions are modified to phosphoserine: serine 98 and serine 105. Residues 105–114 (SRYSSSGYSS) are compositionally biased toward low complexity.

This sequence belongs to the FAM219 family.

The polypeptide is Protein FAM219A (FAM219A) (Macaca fascicularis (Crab-eating macaque)).